The primary structure comprises 209 residues: MGQKVHPRGFRLGLSADWQAKWFNEKNYKEWLLEDEEIRKFIKNKYYHAGISEIYVERPDAERINITVKTARPGIIIGRKGAEITSLREELERKFNRRVVINIEEIKTPELDAQLVAESIASRIEKRASYKVAMKRAIMNAMRKGAQGIKVMVAGRLGGAEIARREWYLRGRLPLQKLKAIIDYGTATAWTKYGTIGIKVWIYKGDADI.

One can recognise a KH type-2 domain in the interval 38 to 107 (IRKFIKNKYY…RVVINIEEIK (70 aa)).

It belongs to the universal ribosomal protein uS3 family. In terms of assembly, part of the 30S ribosomal subunit. Forms a tight complex with proteins S10 and S14.

In terms of biological role, binds the lower part of the 30S subunit head. Binds mRNA in the 70S ribosome, positioning it for translation. The sequence is that of Small ribosomal subunit protein uS3 from Thermotoga sp. (strain RQ2).